A 129-amino-acid chain; its full sequence is Small ribosomal subunit protein uS11 (129 aa).

Belongs to the universal ribosomal protein uS11 family. As to quaternary structure, part of the 30S ribosomal subunit. Interacts with proteins S7 and S18. Binds to IF-3.

Its function is as follows. Located on the platform of the 30S subunit, it bridges several disparate RNA helices of the 16S rRNA. Forms part of the Shine-Dalgarno cleft in the 70S ribosome. This Nitrosospira multiformis (strain ATCC 25196 / NCIMB 11849 / C 71) protein is Small ribosomal subunit protein uS11.